We begin with the raw amino-acid sequence, 107 residues long: MNKQWTIIFALIFTLIVAIFAVINVRSVEVDYLFGRSEWPLILVILGSVLMGALIVFSVGIFQVMKLKREIKTLRKENRTAIHKQEDTHLADQTDTQDASAMIEKKD.

Helical transmembrane passes span 5–25 (WTII…VINV) and 42–62 (ILVI…VGIF). Positions 82–92 (IHKQEDTHLAD) are enriched in basic and acidic residues. Residues 82–107 (IHKQEDTHLADQTDTQDASAMIEKKD) are disordered.

It is found in the cell membrane. This is an uncharacterized protein from Bacillus subtilis (strain 168).